We begin with the raw amino-acid sequence, 197 residues long: FMN-dependent NADH:quinone oxidoreductase (197 aa).

FMN-binding positions include Ser10, 16–18, 93–96, and 137–140; these read SQS, MYNF, and TRGG.

This sequence belongs to the azoreductase type 1 family. In terms of assembly, homodimer. FMN serves as cofactor.

It catalyses the reaction 2 a quinone + NADH + H(+) = 2 a 1,4-benzosemiquinone + NAD(+). The enzyme catalyses N,N-dimethyl-1,4-phenylenediamine + anthranilate + 2 NAD(+) = 2-(4-dimethylaminophenyl)diazenylbenzoate + 2 NADH + 2 H(+). Its function is as follows. Quinone reductase that provides resistance to thiol-specific stress caused by electrophilic quinones. Also exhibits azoreductase activity. Catalyzes the reductive cleavage of the azo bond in aromatic azo compounds to the corresponding amines. This is FMN-dependent NADH:quinone oxidoreductase from Shewanella denitrificans (strain OS217 / ATCC BAA-1090 / DSM 15013).